Reading from the N-terminus, the 241-residue chain is Uridylate kinase (241 aa).

14 to 17 (KLSG) is a binding site for ATP. Gly-56 lines the UMP pocket. ATP contacts are provided by Gly-57 and Arg-61. Residues Asp-77 and 138 to 145 (TGNPFFTT) each bind UMP. The ATP site is built by Thr-165, Tyr-171, and Asp-174.

It belongs to the UMP kinase family. As to quaternary structure, homohexamer.

The protein resides in the cytoplasm. The catalysed reaction is UMP + ATP = UDP + ADP. It functions in the pathway pyrimidine metabolism; CTP biosynthesis via de novo pathway; UDP from UMP (UMPK route): step 1/1. Its activity is regulated as follows. Inhibited by UTP. Its function is as follows. Catalyzes the reversible phosphorylation of UMP to UDP. This is Uridylate kinase from Psychrobacter arcticus (strain DSM 17307 / VKM B-2377 / 273-4).